The following is a 175-amino-acid chain: Chorismate pyruvate-lyase (175 aa).

Substrate-binding residues include M36, R78, L116, and E157.

The protein belongs to the UbiC family. Monomer.

Its subcellular location is the cytoplasm. The enzyme catalyses chorismate = 4-hydroxybenzoate + pyruvate. It participates in cofactor biosynthesis; ubiquinone biosynthesis. In terms of biological role, removes the pyruvyl group from chorismate, with concomitant aromatization of the ring, to provide 4-hydroxybenzoate (4HB) for the ubiquinone pathway. This is Chorismate pyruvate-lyase from Hamiltonella defensa subsp. Acyrthosiphon pisum (strain 5AT).